The primary structure comprises 100 residues: Small ribosomal subunit protein uS14c (100 aa).

Positions 1 to 31 are disordered; the sequence is MARKSLIQREKKRQKLEQKYHSIRRSSKKEI.

This sequence belongs to the universal ribosomal protein uS14 family. Part of the 30S ribosomal subunit.

Its subcellular location is the plastid. It is found in the chloroplast. In terms of biological role, binds 16S rRNA, required for the assembly of 30S particles. This chain is Small ribosomal subunit protein uS14c, found in Nicotiana tomentosiformis (Tobacco).